The primary structure comprises 226 residues: UPF0173 metal-dependent hydrolase GFO_2312 (226 aa).

The protein belongs to the UPF0173 family.

This chain is UPF0173 metal-dependent hydrolase GFO_2312, found in Christiangramia forsetii (strain DSM 17595 / CGMCC 1.15422 / KT0803) (Gramella forsetii).